Reading from the N-terminus, the 173-residue chain is Cytochrome c-type biogenesis protein CcmE (173 aa).

Residues 1–7 are Cytoplasmic-facing; it reads MTRKSRR. A helical; Signal-anchor for type II membrane protein membrane pass occupies residues 8-28; sequence LILIAACGAVLALALGLILSA. The Periplasmic portion of the chain corresponds to 29 to 173; the sequence is MSGSIVFFRS…DATLGQRSER (145 aa). Positions 122 and 126 each coordinate heme. Positions 134–173 are disordered; the sequence is ALKAQGRWQEGGGKDASKAAPKDAAKPETADATLGQRSER. Residues 145–162 are compositionally biased toward basic and acidic residues; sequence GGKDASKAAPKDAAKPET.

Belongs to the CcmE/CycJ family.

It localises to the cell inner membrane. Functionally, heme chaperone required for the biogenesis of c-type cytochromes. Transiently binds heme delivered by CcmC and transfers the heme to apo-cytochromes in a process facilitated by CcmF and CcmH. This is Cytochrome c-type biogenesis protein CcmE from Methylorubrum extorquens (strain CM4 / NCIMB 13688) (Methylobacterium extorquens).